The primary structure comprises 385 residues: Glucans biosynthesis protein C (385 aa).

10 consecutive transmembrane segments (helical) span residues 17 to 37, 60 to 80, 91 to 111, 137 to 157, 173 to 193, 212 to 232, 239 to 259, 274 to 294, 311 to 331, and 338 to 358; these read AWLMLLGIPFHISLIYSSHTW, MQVFFVISGYFSYMLFLRYPL, VGIPMLTAIPLLTLPQFIMLQ, ISHLWFLLVLVVMTTLCVWIF, KFSMVKLSVIFLCLGIGYAVI, FIVMQTLFYLPFFILGALAFI, LFTTPSRGCTLAAALAFVAYL, TESVITMVLGLWMVNVVFSFG, ASLFIYLVHHPLTLFFGAYIT, and WLGFLCGLIFVVGIAIILYEI.

The protein belongs to the acyltransferase 3 family. OpgC subfamily.

It localises to the cell membrane. It participates in glycan metabolism; osmoregulated periplasmic glucan (OPG) biosynthesis. In terms of biological role, necessary for the succinyl substitution of periplasmic glucans. Could catalyze the transfer of succinyl residues from the cytoplasmic side of the membrane to the nascent glucan backbones on the periplasmic side of the membrane. This Escherichia coli (strain SMS-3-5 / SECEC) protein is Glucans biosynthesis protein C.